We begin with the raw amino-acid sequence, 501 residues long: MPSASASRKSQEKPREIMDAAEDYAKERYGISSMIQSQEKSDRVLVRVRDLTIQKADEVVWVRARVHTSRAKGKQCFLVLRQQQFNVQALVAVGDHASKQMVKFAANINKESIVDVEGVVRKVNQKIESCTQQDVELHVQKIYVISLAEPRLPLQLDDAVRPEAEGEEEGRATVNQDTRLDNRVIDLRTSTSQAVFRLQSGICHLFRETLINKGFVEIQTPKIISAASEGGANVFTVSYFKNNAYLAQSPQLYKQMCICADFEKVFCIGPVFRAEDSNTHRHLTEFVGLDIEMAFNYHYHEVMEEIADTMVQIFKGLQERFQTEIQTVNKQFPCEPFKFLEPTLRLEYCEALAMLREAGVEMGDEDDLSTPNEKLLGHLIKEKYDTDFYILDKYPLAVRPFYTMPDPRNPKQSNSYDMFMRGEEILSGAQRIHDPQLLTERALHHGIDLEKIKAYIDSFRFGAPPHAGGGIGLERVTMLFLGLHNVRQTSMFPRDPKRLTP.

Threonine 52 carries the post-translational modification Phosphothreonine. Position 74 is an N6-acetyllysine (lysine 74). Position 229 (glutamate 229) interacts with L-aspartate. At serine 249 the chain carries Phosphoserine. The interval glutamine 251–lysine 254 is aspartate. Arginine 273 is an L-aspartate binding site. Residues arginine 273–glutamate 275 and arginine 281–leucine 283 contribute to the ATP site. Position 374 is an N6-acetyllysine (lysine 374). A binding site for the 3'-end of tRNA region spans residues lysine 411 to serine 415. Glutamate 424 lines the ATP pocket. Residues serine 427 and arginine 431 each contribute to the L-aspartate site. Glycine 472–arginine 475 is a binding site for ATP. Threonine 500 is subject to Phosphothreonine; by PKA.

It belongs to the class-II aminoacyl-tRNA synthetase family. Type 2 subfamily. Homodimer. Part of a multisubunit complex that groups tRNA ligases for Arg (RARS1), Asp (DARS1), Gln (QARS1), Ile (IARS1), Leu (LARS1), Lys (KARS1), Met (MARS1) the bifunctional ligase for Glu and Pro (EPRS1) and the auxiliary subunits AIMP1/p43, AIMP2/p38 and EEF1E1/p18.

It localises to the cytoplasm. It catalyses the reaction tRNA(Asp) + L-aspartate + ATP = L-aspartyl-tRNA(Asp) + AMP + diphosphate. Its function is as follows. Catalyzes the specific attachment of an amino acid to its cognate tRNA in a 2 step reaction: the amino acid (AA) is first activated by ATP to form AA-AMP and then transferred to the acceptor end of the tRNA. The sequence is that of Aspartate--tRNA ligase, cytoplasmic (DARS1) from Pongo abelii (Sumatran orangutan).